The chain runs to 1226 residues: Methionine synthase (1226 aa).

The region spanning 7–327 (KVQIEKQLSE…EHIRQMALVV (321 aa)) is the Hcy-binding domain. 3 residues coordinate Zn(2+): cysteine 249, cysteine 312, and cysteine 313. Residues 358-619 (FINVGERTNV…VPEDLREAVE (262 aa)) form the Pterin-binding domain. A B12-binding N-terminal domain is found at 652–746 (SALEWRDWPV…FINASKEVGA (95 aa)). Methylcob(III)alamin-binding positions include glutamate 696, 758 to 762 (GDVHD), histidine 761, serine 806, threonine 810, and alanine 862. The 136-residue stretch at 748 to 883 (NGKILLATVK…SNELKPSFVE (136 aa)) folds into the B12-binding domain. The 328-residue stretch at 899 to 1226 (KQPRTKPVTL…AEKWLGPNLN (328 aa)) folds into the AdoMet activation domain. Residues aspartate 949, arginine 1137, and 1192–1193 (YF) contribute to the S-adenosyl-L-methionine site.

Belongs to the vitamin-B12 dependent methionine synthase family. Methylcob(III)alamin serves as cofactor. It depends on Zn(2+) as a cofactor.

The enzyme catalyses (6S)-5-methyl-5,6,7,8-tetrahydrofolate + L-homocysteine = (6S)-5,6,7,8-tetrahydrofolate + L-methionine. The protein operates within amino-acid biosynthesis; L-methionine biosynthesis via de novo pathway; L-methionine from L-homocysteine (MetH route): step 1/1. Catalyzes the transfer of a methyl group from methyl-cobalamin to homocysteine, yielding enzyme-bound cob(I)alamin and methionine. Subsequently, remethylates the cofactor using methyltetrahydrofolate. This chain is Methionine synthase (metH), found in Aliivibrio fischeri (Vibrio fischeri).